A 387-amino-acid polypeptide reads, in one-letter code: Cytochrome b (387 aa).

A run of 4 helical transmembrane segments spans residues 32–52 (FGSLLACVLVVQIVTGILLAC), 76–98 (FLLRALHANGASFFFIFLYLHIG), 113–133 (TWNIGVIIFLLTIITAFLGYC), and 179–199 (FFSLHYLMPFVIAALSIMHLI). Residues His82 and His96 each contribute to the heme b site. Heme b is bound by residues His183 and His197. Residue His202 coordinates a ubiquinone. Transmembrane regions (helical) follow at residues 225–245 (FLIKDLITIFIFLLAINYMVF), 289–309 (QLGVVAMLLSILVLLLLPLLD), 321–341 (MGKFFFWCFVADFCILAWIGG), and 348–368 (FITIGAYATAFYFIYFFILIP).

It belongs to the cytochrome b family. As to quaternary structure, fungal cytochrome b-c1 complex contains 10 subunits; 3 respiratory subunits, 2 core proteins and 5 low-molecular weight proteins. Cytochrome b-c1 complex is a homodimer. It depends on heme b as a cofactor.

The protein resides in the mitochondrion inner membrane. Component of the ubiquinol-cytochrome c reductase complex (complex III or cytochrome b-c1 complex) that is part of the mitochondrial respiratory chain. The b-c1 complex mediates electron transfer from ubiquinol to cytochrome c. Contributes to the generation of a proton gradient across the mitochondrial membrane that is then used for ATP synthesis. In Schizosaccharomyces octosporus (Fission yeast), this protein is Cytochrome b (cob).